We begin with the raw amino-acid sequence, 867 residues long: Inactive tyrosine-protein kinase kin-32 (867 aa).

The 325-residue stretch at 3 to 327 (GLARVFLIGG…GYQMLYNQRD (325 aa)) folds into the FERM domain. The 265-residue stretch at 367–631 (ITLKELIGGG…IIEDVRQQII (265 aa)) folds into the Protein kinase domain. ATP contacts are provided by residues 373–381 (IGGGQFGNV) and lysine 400. Residues 662–691 (TLYRTMEDQKRQAEEDAKWLEQEDDEDEDD) adopt a coiled-coil conformation. Residues 674-729 (AEEDAKWLEQEDDEDEDDQDIDQIPSTSHSSVENIRTSNGYLHHTPTSTRSLRFED) are disordered. Over residues 683 to 694 (QEDDEDEDDQDI) the composition is skewed to acidic residues. Polar residues predominate over residues 698–724 (PSTSHSSVENIRTSNGYLHHTPTSTRS).

This sequence belongs to the protein kinase superfamily. Tyr protein kinase family. FAK subfamily. As to expression, expressed in body wall muscles and some neurons in the head.

Functionally, has apparently no tyrosine kinase activity in vitro when expressed in mammalian cells. The chain is Inactive tyrosine-protein kinase kin-32 from Caenorhabditis elegans.